The following is a 1482-amino-acid chain: Pregnancy zone protein (1482 aa).

An N-terminal signal peptide occupies residues 1 to 25 (MRKDRLLHLCLVLLLILLSASDSNS). Asparagine 54, asparagine 69, asparagine 246, asparagine 392, and asparagine 406 each carry an N-linked (GlcNAc...) asparagine glycan. Residues 685–735 (CSVIPSVSAGAVGQGYYGAGLGVVERPYVPQLGTYNVIPLNNEQSSGPVPE) are bait region. Residues asparagine 753, asparagine 875, and asparagine 932 are each glycosylated (N-linked (GlcNAc...) asparagine). The isoglutamyl cysteine thioester (Cys-Gln) cross-link spans 978 to 981 (CGEQ). N-linked (GlcNAc...) asparagine glycans are attached at residues asparagine 997 and asparagine 1430.

Belongs to the protease inhibitor I39 (alpha-2-macroglobulin) family. In terms of assembly, homotetramer, which consists of two pairs of disulfide-linked chains. In terms of tissue distribution, plasma. Prominent constituent of late-pregnancy sera.

It localises to the secreted. In terms of biological role, is able to inhibit all four classes of proteinases by a unique 'trapping' mechanism. This protein has a peptide stretch, called the 'bait region' which contains specific cleavage sites for different proteinases. When a proteinase cleaves the bait region, a conformational change is induced in the protein which traps the proteinase. The entrapped enzyme remains active against low molecular weight substrates (activity against high molecular weight substrates is greatly reduced). Following cleavage in the bait region a thioester bond is hydrolyzed and mediates the covalent binding of the protein to the proteinase. The protein is Pregnancy zone protein (PZP) of Homo sapiens (Human).